We begin with the raw amino-acid sequence, 273 residues long: Large ribosomal subunit protein uL2cz/uL2cy (273 aa).

The interval 224-273 is disordered; it reads NPVDHPHGGGEGRAPIGRKKPATPWGYPALGRRSRKRNKYSDRFILRRRK. A compositionally biased stretch (basic and acidic residues) spans 262–273; that stretch reads KYSDRFILRRRK.

The protein belongs to the universal ribosomal protein uL2 family. Part of the 50S ribosomal subunit.

It localises to the plastid. The protein localises to the chloroplast. This Piper cenocladum (Ant piper) protein is Large ribosomal subunit protein uL2cz/uL2cy (rpl2-A).